A 163-amino-acid chain; its full sequence is Probable ribosome biogenesis protein RLP24 (163 aa).

The protein belongs to the eukaryotic ribosomal protein eL24 family. As to quaternary structure, associated with nucleolar and cytoplasmic pre-60S particles. At the end of biogenesis it dissociates from cytoplasmic pre-60S particles and is likely to be exchanged for its ribosomal homolog, RPL24.

The protein localises to the nucleus. Its subcellular location is the nucleolus. Its function is as follows. Involved in the biogenesis of the 60S ribosomal subunit. Ensures the docking of GTPBP4/NOG1 to pre-60S particles. The sequence is that of Probable ribosome biogenesis protein RLP24 (RSL24D1) from Homo sapiens (Human).